The primary structure comprises 188 residues: Peptidyl-tRNA hydrolase (188 aa).

Tyrosine 14 provides a ligand contact to tRNA. The active-site Proton acceptor is the histidine 19. Tyrosine 64, asparagine 66, and asparagine 112 together coordinate tRNA.

Belongs to the PTH family. As to quaternary structure, monomer.

Its subcellular location is the cytoplasm. The enzyme catalyses an N-acyl-L-alpha-aminoacyl-tRNA + H2O = an N-acyl-L-amino acid + a tRNA + H(+). Its function is as follows. Hydrolyzes ribosome-free peptidyl-tRNAs (with 1 or more amino acids incorporated), which drop off the ribosome during protein synthesis, or as a result of ribosome stalling. Catalyzes the release of premature peptidyl moieties from peptidyl-tRNA molecules trapped in stalled 50S ribosomal subunits, and thus maintains levels of free tRNAs and 50S ribosomes. This is Peptidyl-tRNA hydrolase from Clostridium novyi (strain NT).